A 373-amino-acid chain; its full sequence is Transaldolase (373 aa).

Catalysis depends on Lys143, which acts as the Schiff-base intermediate with substrate.

The protein belongs to the transaldolase family. Type 2 subfamily.

It localises to the cytoplasm. The catalysed reaction is D-sedoheptulose 7-phosphate + D-glyceraldehyde 3-phosphate = D-erythrose 4-phosphate + beta-D-fructose 6-phosphate. Its pathway is carbohydrate degradation; pentose phosphate pathway; D-glyceraldehyde 3-phosphate and beta-D-fructose 6-phosphate from D-ribose 5-phosphate and D-xylulose 5-phosphate (non-oxidative stage): step 2/3. Functionally, transaldolase is important for the balance of metabolites in the pentose-phosphate pathway. In Mycobacterium ulcerans (strain Agy99), this protein is Transaldolase.